We begin with the raw amino-acid sequence, 600 residues long: Elongation factor 4 (600 aa).

The tr-type G domain maps to 4–186; the sequence is DTIRNFSIIA…EIVKKIPPPE (183 aa). GTP is bound by residues 16–21 and 133–136; these read DHGKST and NKID.

This sequence belongs to the TRAFAC class translation factor GTPase superfamily. Classic translation factor GTPase family. LepA subfamily.

The protein resides in the cell inner membrane. It catalyses the reaction GTP + H2O = GDP + phosphate + H(+). Functionally, required for accurate and efficient protein synthesis under certain stress conditions. May act as a fidelity factor of the translation reaction, by catalyzing a one-codon backward translocation of tRNAs on improperly translocated ribosomes. Back-translocation proceeds from a post-translocation (POST) complex to a pre-translocation (PRE) complex, thus giving elongation factor G a second chance to translocate the tRNAs correctly. Binds to ribosomes in a GTP-dependent manner. The chain is Elongation factor 4 from Geobacter sulfurreducens (strain ATCC 51573 / DSM 12127 / PCA).